A 1044-amino-acid polypeptide reads, in one-letter code: Translation initiation factor IF-2 (1044 aa).

The disordered stretch occupies residues 55 to 458 (EAQEGQGAGK…KRKASAQERR (404 aa)). Positions 57-77 (QEGQGAGKSAAKSAKPAAQPK) are enriched in low complexity. Residues 104-146 (LSEKRERRPLTERRPLAERRPLAERPLVDRPVTERPLAERPAA) show a composition bias toward basic and acidic residues. 3 stretches are compositionally biased toward low complexity: residues 147-168 (ELRP…AQPV), 190-231 (KAQP…QKPA), and 254-265 (ASSRPASAAPAA). A compositionally biased stretch (basic and acidic residues) spans 267 to 281 (GEKRPAAAAERREEP). Composition is skewed to low complexity over residues 352–375 (AAGQ…AGAP) and 383–395 (APQR…APLA). Positions 399 to 444 (LDPKVAEQAKAGEGKPRYGQSGDKRRADLYDRREHPSSQPSEEKLF) are enriched in basic and acidic residues. In terms of domain architecture, tr-type G spans 546-714 (PRHPVVTIMG…ILVLAEVSDL (169 aa)). Positions 555 to 562 (GHVDHGKT) are G1. 555–562 (GHVDHGKT) provides a ligand contact to GTP. A G2 region spans residues 580-584 (GITQH). Residues 601–604 (DTPG) form a G3 region. Residues 601-605 (DTPGH) and 655-658 (NKID) each bind GTP. Positions 655–658 (NKID) are G4. Residues 691 to 693 (SAK) form a G5 region.

This sequence belongs to the TRAFAC class translation factor GTPase superfamily. Classic translation factor GTPase family. IF-2 subfamily.

Its subcellular location is the cytoplasm. Its function is as follows. One of the essential components for the initiation of protein synthesis. Protects formylmethionyl-tRNA from spontaneous hydrolysis and promotes its binding to the 30S ribosomal subunits. Also involved in the hydrolysis of GTP during the formation of the 70S ribosomal complex. This is Translation initiation factor IF-2 from Symbiobacterium thermophilum (strain DSM 24528 / JCM 14929 / IAM 14863 / T).